We begin with the raw amino-acid sequence, 123 residues long: Large ribosomal subunit protein bL19 (123 aa).

It belongs to the bacterial ribosomal protein bL19 family.

Functionally, this protein is located at the 30S-50S ribosomal subunit interface and may play a role in the structure and function of the aminoacyl-tRNA binding site. The polypeptide is Large ribosomal subunit protein bL19 (Ruegeria sp. (strain TM1040) (Silicibacter sp.)).